The primary structure comprises 425 residues: Aromatic prenyl transferase ptmE (425 aa).

L-tryptophan is bound by residues 83-84 (GI) and E92. Substrate-binding residues include R107, K198, Y200, R265, K267, Y269, Y345, Y410, and Y414.

It belongs to the tryptophan dimethylallyltransferase family. As to quaternary structure, homodimer.

It participates in secondary metabolite biosynthesis. Its function is as follows. Aromatic prenyl transferase; part of the gene cluster that mediates the biosynthesis of the indole diterpenes penitrems. The geranylgeranyl diphosphate (GGPP) synthase ptmG catalyzes the first step in penitrem biosynthesis via conversion of farnesyl pyrophosphate and isopentyl pyrophosphate into geranylgeranyl pyrophosphate (GGPP). Condensation of indole-3-glycerol phosphate with GGPP by the prenyl transferase ptmC then forms 3-geranylgeranylindole (3-GGI). Epoxidation by the FAD-dependent monooxygenase ptmM leads to a epoxidized-GGI that is substrate of the terpene cyclase ptmB for cyclization to yield paspaline. Paspaline is subsequently converted to 13-desoxypaxilline by the cytochrome P450 monooxygenase ptmP, the latter being then converted to paxilline by the cytochrome P450 monooxygenase ptmQ. Paxilline is converted to beta-paxitriol via C-10 ketoreduction by the short-chain dehydrogenase ptmH which can be monoprenylated at the C-20 by the indole diterpene prenyltransferase ptmD. A two-step elimination (acetylation and elimination) process performed by the O-acetyltransferase ptmV and ptmI leads to the production of the prenylated form of penijanthine. The FAD-linked oxidoreductase ptmO then converts the prenylated form of penijanthine into PC-M5 which is in turn transformed into PC-M4 by the aromatic dimethylallyltransferase ptmE. Five sequential oxidative transformations performed by the cytochrome P450 monooxygenases ptmK, ptmU, ptmL, ptmN and ptmJ yield the various penitrem compounds. PtmK, ptmU and ptmM are involved in the formation of the key bicyclic ring of penitrem C via the formation of the intermediates secopenitrem D and penitrem D. PtmL catalyzes the epoxidation of penitrem D and C to yield penitrem B and F, respectively. PtmJ catalyzes the last benzylic hydroxylation to convert penitrem B to prenitrem E and penitrem F to penitrem A. The protein is Aromatic prenyl transferase ptmE of Penicillium ochrochloron.